We begin with the raw amino-acid sequence, 512 residues long: Centrosomal protein CCDC61 (512 aa).

At Met1 the chain carries N-acetylmethionine. Residues 1-143 (MDQPAGLQVD…PLPLPYQGKP (143 aa)) are head domain. 2 coiled-coil regions span residues 178 to 205 (IWHLREQVSRLASEKRELEAQLGRSREE) and 248 to 275 (CRRLAKELEEAKASERSLRARLKTLTSE). Positions 276–477 (LALYKRGRRT…KSLANSGGWV (202 aa)) are disordered. At Thr285 the chain carries Phosphothreonine. Positions 293–306 (TREDRASSSRERSA) are enriched in basic and acidic residues. Ser334, Ser336, Ser373, and Ser376 each carry phosphoserine. A compositionally biased stretch (low complexity) spans 407–425 (RSSSVDSFRSRCSSASSCS). Ser447 and Ser473 each carry phosphoserine.

It belongs to the CCDC61 family. As to quaternary structure, forms homodimers (via head domain). Interacts with CEP170. Interacts with PCM1 and CEP131. Binds tubulin.

The protein localises to the cytoplasm. Its subcellular location is the cytoskeleton. It localises to the microtubule organizing center. It is found in the centrosome. The protein resides in the centriolar satellite. The protein localises to the cilium basal body. Its function is as follows. Microtubule-binding centrosomal protein required for centriole cohesion, independently of the centrosome-associated protein/CEP250 and rootletin/CROCC linker. In interphase, required for anchoring microtubule at the mother centriole subdistal appendages and for centrosome positioning. During mitosis, may be involved in spindle assembly and chromatin alignment by regulating the organization of spindle microtubules into a symmetrical structure. Has been proposed to play a role in CEP170 recruitment to centrosomes. However, this function could not be confirmed. Plays a non-essential role in ciliogenesis. The polypeptide is Centrosomal protein CCDC61 (Homo sapiens (Human)).